A 135-amino-acid chain; its full sequence is Glutaredoxin-C4 (135 aa).

A Glutaredoxin domain is found at 32–132; that stretch reads ADFVKKTISS…KLLGVSGNKE (101 aa). The cysteines at positions 52 and 55 are disulfide-linked.

Belongs to the glutaredoxin family. CPYC subfamily.

Its subcellular location is the cytoplasm. In terms of biological role, has a glutathione-disulfide oxidoreductase activity in the presence of NADPH and glutathione reductase. Reduces low molecular weight disulfides and proteins. This is Glutaredoxin-C4 (GRXC4) from Arabidopsis thaliana (Mouse-ear cress).